A 1131-amino-acid chain; its full sequence is DNA polymerase II large subunit (1131 aa).

The protein belongs to the archaeal DNA polymerase II family. In terms of assembly, heterodimer of a large subunit and a small subunit.

It carries out the reaction DNA(n) + a 2'-deoxyribonucleoside 5'-triphosphate = DNA(n+1) + diphosphate. The enzyme catalyses Exonucleolytic cleavage in the 3'- to 5'-direction to yield nucleoside 5'-phosphates.. Possesses two activities: a DNA synthesis (polymerase) and an exonucleolytic activity that degrades single-stranded DNA in the 3'- to 5'-direction. Has a template-primer preference which is characteristic of a replicative DNA polymerase. The chain is DNA polymerase II large subunit from Methanococcus maripaludis (strain C5 / ATCC BAA-1333).